Consider the following 133-residue polypeptide: Small ribosomal subunit protein bS6 (133 aa).

The protein belongs to the bacterial ribosomal protein bS6 family.

Binds together with bS18 to 16S ribosomal RNA. In Borrelia turicatae (strain 91E135), this protein is Small ribosomal subunit protein bS6.